Reading from the N-terminus, the 265-residue chain is uncharacterized protein (265 aa).

His7, His9, Glu94, His130, His155, and Asp205 together coordinate a divalent metal cation.

It belongs to the metallo-dependent hydrolases superfamily. TatD-type hydrolase family. It depends on a divalent metal cation as a cofactor.

This is an uncharacterized protein from Escherichia coli O157:H7.